The sequence spans 358 residues: Arogenate dehydrogenase 2, chloroplastic (358 aa).

A chloroplast-targeting transit peptide spans 1 to 36; that stretch reads MLLHFSPAKPLISPPNLRRNSPTFLISPPRSLRIRA. Residues 59 to 338 enclose the Prephenate/arogenate dehydrogenase domain; sequence LKIAVLGFGN…KKTEQKLLND (280 aa). The segment at 336–358 is disordered; that stretch reads LNDGGVVPMNDISSSSSSSSSSS. Positions 348 to 358 are enriched in low complexity; sequence SSSSSSSSSSS.

The protein belongs to the prephenate/arogenate dehydrogenase family. As to expression, expressed in roots, stems, leaves, flowers, siliques and seeds. More abundant in seeds.

Its subcellular location is the plastid. The protein resides in the chloroplast. The enzyme catalyses L-arogenate + NADP(+) = L-tyrosine + CO2 + NADPH. The protein operates within amino-acid biosynthesis; L-tyrosine biosynthesis; L-tyrosine from L-arogenate (NADP(+) route): step 1/1. Its function is as follows. Involved in the biosynthesis of tyrosine. Has a weak prephenate dehydrogenase activity. This chain is Arogenate dehydrogenase 2, chloroplastic (TYRAAT2), found in Arabidopsis thaliana (Mouse-ear cress).